The primary structure comprises 250 residues: 3-deoxy-manno-octulosonate cytidylyltransferase (250 aa).

It belongs to the KdsB family.

Its subcellular location is the cytoplasm. It carries out the reaction 3-deoxy-alpha-D-manno-oct-2-ulosonate + CTP = CMP-3-deoxy-beta-D-manno-octulosonate + diphosphate. The protein operates within nucleotide-sugar biosynthesis; CMP-3-deoxy-D-manno-octulosonate biosynthesis; CMP-3-deoxy-D-manno-octulosonate from 3-deoxy-D-manno-octulosonate and CTP: step 1/1. Its pathway is bacterial outer membrane biogenesis; lipopolysaccharide biosynthesis. Its function is as follows. Activates KDO (a required 8-carbon sugar) for incorporation into bacterial lipopolysaccharide in Gram-negative bacteria. This Xanthomonas campestris pv. campestris (strain 8004) protein is 3-deoxy-manno-octulosonate cytidylyltransferase.